A 530-amino-acid chain; its full sequence is Chaperone Ric-8A (530 aa).

The residue at position 435 (Ser435) is a Phosphoserine. Phosphothreonine is present on residues Thr440 and Thr442. 4 positions are modified to phosphoserine: Ser501, Ser522, Ser523, and Ser527.

This sequence belongs to the synembryn family. As to quaternary structure, interacts with GDP-bound G alpha proteins GNAI1, GNAO1 and GNAQ, and with GNA13 with lower affinity. Does not interact with G-alpha proteins when they are in complex with subunits beta and gamma. Interacts (via C-terminus) with RGS14; the interaction stimulates the dissociation of the complex between RGS14 and the active GTP-bound form of GNAI1. Interacts with NCS1; interaction is favored in the absence of Ca(2+) and myristoylation of NCS1 is not required. Expressed in neurons and neurites of the CA1 and CA2 subregions of the hippocampus (at protein level). In adult brain, it is expressed in the neocortex, hippocampus and cerebellum as well as in the pineal gland and ependymal layer.

The protein localises to the cytoplasm. It localises to the cell cortex. Its function is as follows. Chaperone that specifically binds and folds nascent G alpha proteins prior to G protein heterotrimer formation, promoting their stability and activity: folds GNAI1, GNAO1, GNA13 and GNAQ. Does not fold G(s) G-alpha proteins GNAS nor GNAL. Also acts as a guanine nucleotide exchange factor (GEF) for G alpha proteins by stimulating exchange of bound GDP for free GTP. Involved in regulation of microtubule pulling forces during mitotic movement of chromosomes by stimulating G(i)-alpha protein (GNAI1), possibly leading to release G(i)-alpha-GTP and NuMA proteins from the NuMA-GPSM2-G(i)-alpha-GDP complex. Also acts as an activator for G(q)-alpha (GNAQ) protein by enhancing the G(q)-coupled receptor-mediated ERK activation. The chain is Chaperone Ric-8A from Mus musculus (Mouse).